We begin with the raw amino-acid sequence, 234 residues long: MLTYETWEENVVSFSEEDETKGALSVLNWAYKEYKDEVVYACSFGVEGMVLLHIINQVNPSAKVVFLDTNVHFQETYELIQKVRERFPSLNIIEKQPELTLDEQAKLHGEKLWESNPNLCCKIRKILPLEKSLVVEKAWISGLRREQSETRKHTKFINQDHRFQSIKVCPLIHWTWKEVWRYVYKHSLPYNPLHDVGYPSIGCEKCTLPVGDGGDSRDGRWAGKVKTECGLHYQ.

[4Fe-4S] cluster contacts are provided by C120, C121, C203, and C206. Residue C229 is the Nucleophile; cysteine thiosulfonate intermediate of the active site.

This sequence belongs to the PAPS reductase family. CysH subfamily. [4Fe-4S] cluster is required as a cofactor.

It is found in the cytoplasm. The enzyme catalyses [thioredoxin]-disulfide + sulfite + AMP + 2 H(+) = adenosine 5'-phosphosulfate + [thioredoxin]-dithiol. Its pathway is sulfur metabolism; hydrogen sulfide biosynthesis; sulfite from sulfate. Catalyzes the formation of sulfite from adenosine 5'-phosphosulfate (APS) using thioredoxin as an electron donor. This chain is Adenosine 5'-phosphosulfate reductase, found in Bacillus cereus (strain B4264).